Here is a 286-residue protein sequence, read N- to C-terminus: Phosphatidylserine decarboxylase proenzyme (286 aa).

Active-site charge relay system; for autoendoproteolytic cleavage activity residues include aspartate 90, histidine 147, and serine 252. Catalysis depends on serine 252, which acts as the Schiff-base intermediate with substrate; via pyruvic acid; for decarboxylase activity. Pyruvic acid (Ser); by autocatalysis is present on serine 252.

It belongs to the phosphatidylserine decarboxylase family. PSD-B subfamily. Prokaryotic type I sub-subfamily. In terms of assembly, heterodimer of a large membrane-associated beta subunit and a small pyruvoyl-containing alpha subunit. Requires pyruvate as cofactor. In terms of processing, is synthesized initially as an inactive proenzyme. Formation of the active enzyme involves a self-maturation process in which the active site pyruvoyl group is generated from an internal serine residue via an autocatalytic post-translational modification. Two non-identical subunits are generated from the proenzyme in this reaction, and the pyruvate is formed at the N-terminus of the alpha chain, which is derived from the carboxyl end of the proenzyme. The autoendoproteolytic cleavage occurs by a canonical serine protease mechanism, in which the side chain hydroxyl group of the serine supplies its oxygen atom to form the C-terminus of the beta chain, while the remainder of the serine residue undergoes an oxidative deamination to produce ammonia and the pyruvoyl prosthetic group on the alpha chain. During this reaction, the Ser that is part of the protease active site of the proenzyme becomes the pyruvoyl prosthetic group, which constitutes an essential element of the active site of the mature decarboxylase.

Its subcellular location is the cell membrane. The catalysed reaction is a 1,2-diacyl-sn-glycero-3-phospho-L-serine + H(+) = a 1,2-diacyl-sn-glycero-3-phosphoethanolamine + CO2. It participates in phospholipid metabolism; phosphatidylethanolamine biosynthesis; phosphatidylethanolamine from CDP-diacylglycerol: step 2/2. Its function is as follows. Catalyzes the formation of phosphatidylethanolamine (PtdEtn) from phosphatidylserine (PtdSer). The protein is Phosphatidylserine decarboxylase proenzyme of Pseudomonas fluorescens (strain Pf0-1).